We begin with the raw amino-acid sequence, 420 residues long: Replication factor C large subunit (420 aa).

46–53 (GVQGSGKT) contributes to the ATP binding site.

It belongs to the activator 1 small subunits family. RfcL subfamily. As to quaternary structure, heteromultimer composed of small subunits (RfcS) and large subunits (RfcL).

Functionally, part of the RFC clamp loader complex which loads the PCNA sliding clamp onto DNA. The protein is Replication factor C large subunit of Thermoplasma volcanium (strain ATCC 51530 / DSM 4299 / JCM 9571 / NBRC 15438 / GSS1).